The primary structure comprises 196 residues: 7-methyl-GTP pyrophosphatase (196 aa).

D72 functions as the Proton acceptor in the catalytic mechanism.

Belongs to the Maf family. YceF subfamily. It depends on a divalent metal cation as a cofactor.

It is found in the cytoplasm. It catalyses the reaction N(7)-methyl-GTP + H2O = N(7)-methyl-GMP + diphosphate + H(+). Functionally, nucleoside triphosphate pyrophosphatase that hydrolyzes 7-methyl-GTP (m(7)GTP). May have a dual role in cell division arrest and in preventing the incorporation of modified nucleotides into cellular nucleic acids. The sequence is that of 7-methyl-GTP pyrophosphatase from Neisseria meningitidis serogroup A / serotype 4A (strain DSM 15465 / Z2491).